Consider the following 198-residue polypeptide: Charged multivesicular body protein 1a (198 aa).

Coiled coils occupy residues 7 to 41 and 176 to 198; these read QLKF…QQKN and GETS…ALRN. Residues 171–198 form a disordered region; the sequence is GASALGETSARAQEKEDQLSRRLAALRN. The MIT-interacting motif motif lies at 187–197; sequence DQLSRRLAALR.

Belongs to the SNF7 family. In terms of assembly, probable peripherally associated component of the endosomal sorting required for transport complex III (ESCRT-III).

Its subcellular location is the cytoplasm. The protein localises to the endosome membrane. Functionally, probable peripherally associated component of the endosomal sorting required for transport complex III (ESCRT-III) which is involved in multivesicular bodies (MVBs) formation and sorting of endosomal cargo proteins into MVBs. MVBs contain intraluminal vesicles (ILVs) that are generated by invagination and scission from the limiting membrane of the endosome and mostly are delivered to lysosomes enabling degradation of membrane proteins, such as stimulated growth factor receptors, lysosomal enzymes and lipids. This Danio rerio (Zebrafish) protein is Charged multivesicular body protein 1a (chmp1a).